A 500-amino-acid chain; its full sequence is NAD(P)H-quinone oxidoreductase chain 4, chloroplastic (500 aa).

The next 12 helical transmembrane spans lie at 4-24 (FPWL…ILFI), 37-57 (ICIC…NFQL), 80-100 (LGID…TTLA), 134-154 (LLLF…LLSM), 167-187 (FILY…GMGL), 208-228 (GLEI…PPII), 242-262 (HYST…YGLV), 272-292 (AHSL…IYAA), 330-350 (GAIL…FLAG), 386-406 (LASP…GIIT), 416-436 (ILIT…LLSM), and 462-482 (IFIL…PDFV).

The protein belongs to the complex I subunit 4 family.

It is found in the plastid. The protein localises to the chloroplast thylakoid membrane. The enzyme catalyses a plastoquinone + NADH + (n+1) H(+)(in) = a plastoquinol + NAD(+) + n H(+)(out). The catalysed reaction is a plastoquinone + NADPH + (n+1) H(+)(in) = a plastoquinol + NADP(+) + n H(+)(out). The polypeptide is NAD(P)H-quinone oxidoreductase chain 4, chloroplastic (Amborella trichopoda).